We begin with the raw amino-acid sequence, 461 residues long: ATP synthase subunit beta (461 aa).

151 to 158 (GGAGVGKT) lines the ATP pocket.

It belongs to the ATPase alpha/beta chains family. F-type ATPases have 2 components, CF(1) - the catalytic core - and CF(0) - the membrane proton channel. CF(1) has five subunits: alpha(3), beta(3), gamma(1), delta(1), epsilon(1). CF(0) has three main subunits: a(1), b(2) and c(9-12). The alpha and beta chains form an alternating ring which encloses part of the gamma chain. CF(1) is attached to CF(0) by a central stalk formed by the gamma and epsilon chains, while a peripheral stalk is formed by the delta and b chains.

The protein localises to the cell inner membrane. It catalyses the reaction ATP + H2O + 4 H(+)(in) = ADP + phosphate + 5 H(+)(out). Produces ATP from ADP in the presence of a proton gradient across the membrane. The catalytic sites are hosted primarily by the beta subunits. The chain is ATP synthase subunit beta from Coxiella burnetii (strain Dugway 5J108-111).